A 257-amino-acid polypeptide reads, in one-letter code: Diphthine synthase (257 aa).

S-adenosyl-L-methionine-binding positions include Leu9, Asp86, Val89, Ser114–Ile115, Leu166, Ala207, and His232.

The protein belongs to the diphthine synthase family. As to quaternary structure, homodimer.

The catalysed reaction is 2-[(3S)-amino-3-carboxypropyl]-L-histidyl-[translation elongation factor 2] + 3 S-adenosyl-L-methionine = diphthine-[translation elongation factor 2] + 3 S-adenosyl-L-homocysteine + 3 H(+). Its pathway is protein modification; peptidyl-diphthamide biosynthesis. In terms of biological role, S-adenosyl-L-methionine-dependent methyltransferase that catalyzes the trimethylation of the amino group of the modified target histidine residue in translation elongation factor 2 (EF-2), to form an intermediate called diphthine. The three successive methylation reactions represent the second step of diphthamide biosynthesis. The sequence is that of Diphthine synthase from Methanocella arvoryzae (strain DSM 22066 / NBRC 105507 / MRE50).